Consider the following 193-residue polypeptide: Putative manganese efflux pump MntP (193 aa).

6 helical membrane-spanning segments follow: residues 3–23 (LATL…AALG), 39–59 (VGAY…ALGL), 65–85 (IAAF…GHMV), 113–133 (LALA…GLAV), 138–158 (ILMA…GGVL), and 173–193 (VLGG…HLSA).

The protein belongs to the MntP (TC 9.B.29) family.

The protein resides in the cell inner membrane. Probably functions as a manganese efflux pump. The chain is Putative manganese efflux pump MntP from Rhodospirillum rubrum (strain ATCC 11170 / ATH 1.1.1 / DSM 467 / LMG 4362 / NCIMB 8255 / S1).